Consider the following 276-residue polypeptide: Src-like-adapter (276 aa).

A lipid anchor (N-myristoyl glycine) is attached at Gly2. The SH3 domain maps to 22–82 (LDSDFLAVLS…PGICVARVYH (61 aa)). The 92-residue stretch at 84–175 (WLFEGLGRDK…GLCCVLTTPC (92 aa)) folds into the SH2 domain. The tract at residues 212–276 (EGTENPLGVD…FFSSPPYFED (65 aa)) is SLA C-terminal. Position 253 is a phosphoserine (Ser253). Tyr273 carries the post-translational modification Phosphotyrosine.

In terms of assembly, interacts with EPHA2, VAV1, LCP2 and PDGFRB. Homodimer. Homodimerization and interaction with phosphorylated CBL occurs via its C-terminal domain. Interacts with phosphorylated proteins ZAP70, CD3Z, SYK and LAT via its SH2 domain. As to expression, expressed in lung and fetal brain. Weakly expressed in heart, adult brain, placenta, liver, skeletal muscle, kidney and pancreas.

The protein resides in the cytoplasm. It is found in the endosome. Adapter protein, which negatively regulates T-cell receptor (TCR) signaling. Inhibits T-cell antigen-receptor induced activation of nuclear factor of activated T-cells. Involved in the negative regulation of positive selection and mitosis of T-cells. May act by linking signaling proteins such as ZAP70 with CBL, leading to a CBL dependent degradation of signaling proteins. This chain is Src-like-adapter (SLA), found in Homo sapiens (Human).